The chain runs to 103 residues: Thioredoxin-1 (103 aa).

One can recognise a Thioredoxin domain in the interval 2 to 103; that stretch reads VKQVSDSSEF…KLEASIKANL (102 aa). Catalysis depends on nucleophile residues Cys-30 and Cys-33. Residues Cys-30 and Cys-33 are joined by a disulfide bond.

The protein belongs to the thioredoxin family.

Participates in various redox reactions through the reversible oxidation of its active center dithiol to a disulfide and catalyzes dithiol-disulfide exchange reactions. The polypeptide is Thioredoxin-1 (trx1) (Schizosaccharomyces pombe (strain 972 / ATCC 24843) (Fission yeast)).